A 485-amino-acid chain; its full sequence is Glutamate--tRNA ligase (485 aa).

Positions 11–21 (PSPTGYMHVGN) match the 'HIGH' region motif. Zn(2+)-binding residues include Cys-108, Cys-110, Cys-135, and Asp-137. A 'KMSKS' region motif is present at residues 252–256 (KLSKR). ATP is bound at residue Lys-255.

The protein belongs to the class-I aminoacyl-tRNA synthetase family. Glutamate--tRNA ligase type 1 subfamily. In terms of assembly, monomer. Zn(2+) serves as cofactor.

It localises to the cytoplasm. It catalyses the reaction tRNA(Glu) + L-glutamate + ATP = L-glutamyl-tRNA(Glu) + AMP + diphosphate. In terms of biological role, catalyzes the attachment of glutamate to tRNA(Glu) in a two-step reaction: glutamate is first activated by ATP to form Glu-AMP and then transferred to the acceptor end of tRNA(Glu). This chain is Glutamate--tRNA ligase, found in Clostridium botulinum (strain Okra / Type B1).